We begin with the raw amino-acid sequence, 122 residues long: S-adenosylmethionine decarboxylase proenzyme (122 aa).

The active-site Schiff-base intermediate with substrate; via pyruvic acid is the S69. A Pyruvic acid (Ser); by autocatalysis modification is found at S69. The Proton acceptor; for processing activity role is filled by H74. Residue C89 is the Proton donor; for catalytic activity of the active site.

Belongs to the prokaryotic AdoMetDC family. Type 1 subfamily. As to quaternary structure, heterotetramer of two alpha and two beta chains arranged as a dimer of alpha/beta heterodimers. It depends on pyruvate as a cofactor. Post-translationally, is synthesized initially as an inactive proenzyme. Formation of the active enzyme involves a self-maturation process in which the active site pyruvoyl group is generated from an internal serine residue via an autocatalytic post-translational modification. Two non-identical subunits are generated from the proenzyme in this reaction, and the pyruvate is formed at the N-terminus of the alpha chain, which is derived from the carboxyl end of the proenzyme. The post-translation cleavage follows an unusual pathway, termed non-hydrolytic serinolysis, in which the side chain hydroxyl group of the serine supplies its oxygen atom to form the C-terminus of the beta chain, while the remainder of the serine residue undergoes an oxidative deamination to produce ammonia and the pyruvoyl group blocking the N-terminus of the alpha chain.

It catalyses the reaction S-adenosyl-L-methionine + H(+) = S-adenosyl 3-(methylsulfanyl)propylamine + CO2. The protein operates within amine and polyamine biosynthesis; S-adenosylmethioninamine biosynthesis; S-adenosylmethioninamine from S-adenosyl-L-methionine: step 1/1. In terms of biological role, catalyzes the decarboxylation of S-adenosylmethionine to S-adenosylmethioninamine (dcAdoMet), the propylamine donor required for the synthesis of the polyamines spermine and spermidine from the diamine putrescine. The polypeptide is S-adenosylmethionine decarboxylase proenzyme (Sulfolobus acidocaldarius (strain ATCC 33909 / DSM 639 / JCM 8929 / NBRC 15157 / NCIMB 11770)).